A 754-amino-acid polypeptide reads, in one-letter code: 5-methyltetrahydropteroyltriglutamate--homocysteine methyltransferase (754 aa).

5-methyltetrahydropteroyltri-L-glutamate is bound by residues 15–18 and K114; that span reads RELK. Residues 430-432 and E483 contribute to the L-homocysteine site; that span reads IGS. L-methionine contacts are provided by residues 430 to 432 and E483; that span reads IGS. Residues 514-515 and W560 each bind 5-methyltetrahydropteroyltri-L-glutamate; that span reads RC. An L-homocysteine-binding site is contributed by D598. D598 lines the L-methionine pocket. 5-methyltetrahydropteroyltri-L-glutamate is bound at residue E604. Residues H641, C643, and E665 each contribute to the Zn(2+) site. H694 functions as the Proton donor in the catalytic mechanism. C726 serves as a coordination point for Zn(2+).

The protein belongs to the vitamin-B12 independent methionine synthase family. The cofactor is Zn(2+).

It catalyses the reaction 5-methyltetrahydropteroyltri-L-glutamate + L-homocysteine = tetrahydropteroyltri-L-glutamate + L-methionine. Its pathway is amino-acid biosynthesis; L-methionine biosynthesis via de novo pathway; L-methionine from L-homocysteine (MetE route): step 1/1. Catalyzes the transfer of a methyl group from 5-methyltetrahydrofolate to homocysteine resulting in methionine formation. In Campylobacter jejuni subsp. jejuni serotype O:6 (strain 81116 / NCTC 11828), this protein is 5-methyltetrahydropteroyltriglutamate--homocysteine methyltransferase.